The sequence spans 160 residues: Putative tRNA (cytidine(34)-2'-O)-methyltransferase (160 aa).

S-adenosyl-L-methionine contacts are provided by Ile82, Gly107, Leu128, and Ser136.

This sequence belongs to the class IV-like SAM-binding methyltransferase superfamily. RNA methyltransferase TrmH family. TrmL subfamily.

The protein localises to the cytoplasm. It catalyses the reaction cytidine(34) in tRNA + S-adenosyl-L-methionine = 2'-O-methylcytidine(34) in tRNA + S-adenosyl-L-homocysteine + H(+). The catalysed reaction is 5-carboxymethylaminomethyluridine(34) in tRNA(Leu) + S-adenosyl-L-methionine = 5-carboxymethylaminomethyl-2'-O-methyluridine(34) in tRNA(Leu) + S-adenosyl-L-homocysteine + H(+). Could methylate the ribose at the nucleotide 34 wobble position in tRNA. This Bacillus subtilis (strain 168) protein is Putative tRNA (cytidine(34)-2'-O)-methyltransferase (cspR).